Consider the following 414-residue polypeptide: Acyltransferase MYCGRDRAFT_85486 (414 aa).

The span at 16–25 shows a compositional bias: polar residues; that stretch reads DGTSTVTIRP. A disordered region spans residues 16 to 47; sequence DGTSTVTIRPTQKAAPSEEPSQDTAPSKKDSN. Residue histidine 329 participates in substrate binding. The Proton acceptor role is filled by glutamate 367.

The protein belongs to the lysine N-acyltransferase mbtK family.

The protein operates within siderophore biosynthesis. Its function is as follows. Acyltransferase; part of the gene cluster 14 that mediates the biosynthesis of a ferrichrome A-like siderophore which may contribute to organismal virulence. The first step of siderophore biosynthesis is performed by the HMG-CoA synthase (HMGS) MYCGRDRAFT_54740 which catalyzes the generation of HMG-CoA and CoA using acetoacetyl-CoA and acetyl-CoA as substrates. The enoyl-CoA isomerase/hydratase MYCGRDRAFT_76805 then catalyzes the conversion of HMG-CoA to methylglutaconyl-CoA. The acyltransferase MYCGRDRAFT_85486 then fuses methylglutaconyl-CoA with hydroxyornithine to yield methylglutaconyl hydroxyornithine. Methylglutaconyl hydroxyornithine is then available for use by the nonribosomal peptide synthetase NRPS2 to generate the ferrichrome A-like siderophore. This is Acyltransferase MYCGRDRAFT_85486 from Zymoseptoria tritici (strain CBS 115943 / IPO323) (Speckled leaf blotch fungus).